The primary structure comprises 107 residues: Regulatory protein SoxS (107 aa).

In terms of domain architecture, HTH araC/xylS-type spans 8–106 (QDLIAWIDEH…DRTPSDYRHR (99 aa)). 2 DNA-binding regions (H-T-H motif) span residues 25 to 46 (DVVA…RTVT) and 73 to 96 (IFDI…RRQF).

Its subcellular location is the cytoplasm. Functionally, transcriptional activator of the superoxide response regulon of E.coli that includes at least 10 genes such as sodA, nfo, zwf and micF. Binds the DNA sequence 5'-GCACN(7)CAA-3'. It also facilitates the subsequent binding of RNA polymerase to the micF and the nfo promoters. This chain is Regulatory protein SoxS (soxS), found in Escherichia coli O157:H7.